The following is a 461-amino-acid chain: Chromosomal replication initiator protein DnaA (461 aa).

Residues 1–87 (MAVSLWQQCI…IGSRPSAKPV (87 aa)) form a domain I, interacts with DnaA modulators region. Residues 87 to 124 (VVQATAAIRPKPAASKAVEKPTFNAPQAEPAITANHRS) form a domain II region. The tract at residues 125–341 (NINPTYQFDN…GALNRVIANA (217 aa)) is domain III, AAA+ region. ATP-binding residues include glycine 169, glycine 171, lysine 172, and threonine 173. Residues 342–461 (NFTGRPITID…YANLIRTLSS (120 aa)) are domain IV, binds dsDNA.

Belongs to the DnaA family. In terms of assembly, oligomerizes as a right-handed, spiral filament on DNA at oriC.

The protein resides in the cytoplasm. Functionally, plays an essential role in the initiation and regulation of chromosomal replication. ATP-DnaA binds to the origin of replication (oriC) to initiate formation of the DNA replication initiation complex once per cell cycle. Binds the DnaA box (a 9 base pair repeat at the origin) and separates the double-stranded (ds)DNA. Forms a right-handed helical filament on oriC DNA; dsDNA binds to the exterior of the filament while single-stranded (ss)DNA is stabiized in the filament's interior. The ATP-DnaA-oriC complex binds and stabilizes one strand of the AT-rich DNA unwinding element (DUE), permitting loading of DNA polymerase. After initiation quickly degrades to an ADP-DnaA complex that is not apt for DNA replication. Binds acidic phospholipids. This chain is Chromosomal replication initiator protein DnaA, found in Shewanella piezotolerans (strain WP3 / JCM 13877).